The chain runs to 536 residues: Mannuronan C5-epimerase (536 aa).

Positions 1 to 36 (MNSHASNGRSRNWPHALLESALLTSALLMASSVALA) are cleaved as a signal peptide. PbH1 repeat units follow at residues 298–320 (TRDF…DPHD), 322–345 (SHGL…IISR), 347–369 (VDNS…VLDR), 371–393 (SVGN…TLYE), and 394–416 (SGNN…RVRN). Histidine 319 serves as the catalytic Proton acceptor.

This sequence belongs to the D-mannuronate C5-epimerase family.

It is found in the periplasm. It catalyses the reaction [(1-&gt;4)-beta-D-mannuronosyl](n) = [alginate](n). It functions in the pathway glycan biosynthesis; alginate biosynthesis. Functionally, catalyzes the epimerization of beta-D-mannuronate to alpha-L-guluronate during the synthesis of the linear polysaccharide alginate. In addition, is part of a periplasmic protein complex that protects alginate from degradation by AlgL by channeling the newly formed alginate polymer through a scaffold that transfers the alginate polymer through the periplasmic space to the outer membrane secretin AlgE. This Pseudomonas syringae pv. tomato (strain ATCC BAA-871 / DC3000) protein is Mannuronan C5-epimerase (algG).